A 41-amino-acid chain; its full sequence is Large ribosomal subunit protein bL36 (41 aa).

This sequence belongs to the bacterial ribosomal protein bL36 family.

In Bartonella bacilliformis (strain ATCC 35685 / KC583 / Herrer 020/F12,63), this protein is Large ribosomal subunit protein bL36.